The sequence spans 310 residues: Lipoyl synthase (310 aa).

Residues cysteine 51, cysteine 56, cysteine 62, cysteine 77, cysteine 81, cysteine 84, and serine 290 each coordinate [4Fe-4S] cluster. The 218-residue stretch at 63–280 (WSRKTATYLA…RRVGESLGLF (218 aa)) folds into the Radical SAM core domain.

It belongs to the radical SAM superfamily. Lipoyl synthase family. [4Fe-4S] cluster is required as a cofactor.

It localises to the cytoplasm. It carries out the reaction [[Fe-S] cluster scaffold protein carrying a second [4Fe-4S](2+) cluster] + N(6)-octanoyl-L-lysyl-[protein] + 2 oxidized [2Fe-2S]-[ferredoxin] + 2 S-adenosyl-L-methionine + 4 H(+) = [[Fe-S] cluster scaffold protein] + N(6)-[(R)-dihydrolipoyl]-L-lysyl-[protein] + 4 Fe(3+) + 2 hydrogen sulfide + 2 5'-deoxyadenosine + 2 L-methionine + 2 reduced [2Fe-2S]-[ferredoxin]. It participates in protein modification; protein lipoylation via endogenous pathway; protein N(6)-(lipoyl)lysine from octanoyl-[acyl-carrier-protein]: step 2/2. Its function is as follows. Catalyzes the radical-mediated insertion of two sulfur atoms into the C-6 and C-8 positions of the octanoyl moiety bound to the lipoyl domains of lipoate-dependent enzymes, thereby converting the octanoylated domains into lipoylated derivatives. The chain is Lipoyl synthase from Chlamydia abortus (strain DSM 27085 / S26/3) (Chlamydophila abortus).